Consider the following 216-residue polypeptide: Maleylacetoacetate isomerase (216 aa).

M1 bears the N-acetylmethionine mark. The region spanning 4 to 87 (GKPVLYSYFR…YLEETRPIPR (84 aa)) is the GST N-terminal domain. Glutathione-binding positions include 14–19 (SSCSWR) and Q45. Residue K57 is modified to N6-succinyllysine. Residues V59, 71 to 72 (QS), Q111, and 115 to 117 (NLS) each bind glutathione. In terms of domain architecture, GST C-terminal spans 92–212 (DPQKRAIVRM…HPCRQPDTPA (121 aa)). Phosphothreonine is present on T136. S137 carries the phosphoserine modification. At K177 the chain carries N6-succinyllysine. A Phosphoserine modification is found at S181.

The protein belongs to the GST superfamily. Zeta family. As to quaternary structure, homodimer. The cofactor is glutathione. The N-terminus is blocked.

The protein localises to the cytoplasm. The catalysed reaction is 4-maleylacetoacetate = 4-fumarylacetoacetate. It carries out the reaction RX + glutathione = an S-substituted glutathione + a halide anion + H(+). Its pathway is amino-acid degradation; L-phenylalanine degradation; acetoacetate and fumarate from L-phenylalanine: step 5/6. In terms of biological role, probable bifunctional enzyme showing minimal glutathione-conjugating activity with ethacrynic acid and 7-chloro-4-nitrobenz-2-oxa-1, 3-diazole and maleylacetoacetate isomerase activity. Also has low glutathione peroxidase activity with t-butyl and cumene hydroperoxides. Is able to catalyze the glutathione dependent oxygenation of dichloroacetic acid to glyoxylic acid. The chain is Maleylacetoacetate isomerase (Gstz1) from Rattus norvegicus (Rat).